The chain runs to 214 residues: Redox-sensing transcriptional repressor Rex (214 aa).

A DNA-binding region (H-T-H motif) is located at residues 17-56 (KYHRYLEELLKSDVDRISSKELSEKIGFTASQIRQDLNCF). NAD(+) is bound at residue 91–96 (GAGNIG).

It belongs to the transcriptional regulatory Rex family. Homodimer.

The protein localises to the cytoplasm. Modulates transcription in response to changes in cellular NADH/NAD(+) redox state. In Clostridium acetobutylicum (strain ATCC 824 / DSM 792 / JCM 1419 / IAM 19013 / LMG 5710 / NBRC 13948 / NRRL B-527 / VKM B-1787 / 2291 / W), this protein is Redox-sensing transcriptional repressor Rex.